Here is a 544-residue protein sequence, read N- to C-terminus: Chaperonin GroEL (544 aa).

ATP-binding positions include 30–33, K51, 87–91, G415, 478–480, and D494; these read TLGP, DGTTT, and NAA.

It belongs to the chaperonin (HSP60) family. Forms a cylinder of 14 subunits composed of two heptameric rings stacked back-to-back. Interacts with the co-chaperonin GroES.

The protein resides in the cytoplasm. It carries out the reaction ATP + H2O + a folded polypeptide = ADP + phosphate + an unfolded polypeptide.. Its function is as follows. Together with its co-chaperonin GroES, plays an essential role in assisting protein folding. The GroEL-GroES system forms a nano-cage that allows encapsulation of the non-native substrate proteins and provides a physical environment optimized to promote and accelerate protein folding. The chain is Chaperonin GroEL from Geobacter sulfurreducens (strain ATCC 51573 / DSM 12127 / PCA).